A 178-amino-acid chain; its full sequence is Gamma-crystallin S (178 aa).

N-acetylserine is present on S2. The tract at residues 2–5 (SKTG) is N-terminal arm. Beta/gamma crystallin 'Greek key' domains follow at residues 6–44 (TKIT…KVEG) and 45–87 (GTWA…RAVH). The interval 88-93 (LPSGGQ) is connecting peptide. 2 consecutive Beta/gamma crystallin 'Greek key' domains span residues 94 to 134 (YKIQ…KVLE) and 135 to 177 (GVWI…RRIV).

This sequence belongs to the beta/gamma-crystallin family. As to quaternary structure, monomer.

Crystallins are the dominant structural components of the vertebrate eye lens. This chain is Gamma-crystallin S (CRYGS), found in Homo sapiens (Human).